Consider the following 383-residue polypeptide: Cytochrome b (383 aa).

Transmembrane regions (helical) follow at residues 32–52 (FGSL…FLAM), 76–98 (WLIR…CHIA), 113–133 (TWSI…LGYV), and 179–199 (FFSL…AHMI). Residues H82 and H96 each contribute to the heme b site. Heme b-binding residues include H183 and H197. A ubiquinone is bound at residue H202. The next 4 helical transmembrane spans lie at 225 to 245 (FIFK…IFVC), 289 to 309 (LLGV…PLTD), 321 to 341 (LMKL…WIGA), and 348 to 368 (YLEV…FIVP).

Belongs to the cytochrome b family. As to quaternary structure, fungal cytochrome b-c1 complex contains 10 subunits; 3 respiratory subunits, 2 core proteins and 5 low-molecular weight proteins. Cytochrome b-c1 complex is a homodimer. Requires heme b as cofactor.

The protein resides in the mitochondrion inner membrane. In terms of biological role, component of the ubiquinol-cytochrome c reductase complex (complex III or cytochrome b-c1 complex) that is part of the mitochondrial respiratory chain. The b-c1 complex mediates electron transfer from ubiquinol to cytochrome c. Contributes to the generation of a proton gradient across the mitochondrial membrane that is then used for ATP synthesis. The sequence is that of Cytochrome b (cob) from Schizophyllum commune (Split gill fungus).